The primary structure comprises 1052 residues: RIMS-binding protein 2 (1052 aa).

Residues 115–164 (GEYIRPLPQPGDRPEPLSAKPTFLSRSGSARCRSESDMENERNSNTSKQR) form a disordered region. The span at 146–156 (CRSESDMENER) shows a compositional bias: basic and acidic residues. The SH3 1 domain maps to 167–234 (GKVHLCVARY…PSNFVDFVQD (68 aa)). Fibronectin type-III domains lie at 297-390 (VPYP…GKDV), 393-475 (APSH…KKEA), and 489-590 (PPQD…VPPT). Disordered stretches follow at residues 584–615 (ELLV…DEHL), 629–666 (RAPG…PVST), 697–716 (SAGQ…PDFK), 767–787 (EMQL…NALK), and 805–829 (FPRG…YGRD). A compositionally biased stretch (pro residues) spans 585–598 (LLVPPTPHPRPAPQ). The segment covering 645-654 (PGRRSPSPSR) has biased composition (low complexity). Ser-704 and Ser-712 each carry phosphoserine. Ser-832 and Ser-839 each carry phosphoserine. The residue at position 841 (Thr-841) is a Phosphothreonine. 2 consecutive SH3 domains span residues 848–916 (LPAR…EIQA) and 952–1019 (VSTR…EVPD). Positions 1029 to 1052 (PSHYSQDTPMRSKAKRKKSVHFTP) are disordered. Basic residues predominate over residues 1040 to 1052 (SKAKRKKSVHFTP).

Belongs to the RIMBP family. In terms of assembly, interacts with RIMS1, RIMS2, CACNA1D and CACNA1B, and potentially with other Ca(2+) channel alpha-1 isoforms.

It is found in the cell membrane. The protein localises to the synapse. Plays a role in the synaptic transmission as bifunctional linker that interacts simultaneously with RIMS1, RIMS2, CACNA1D and CACNA1B. The polypeptide is RIMS-binding protein 2 (RIMBP2) (Homo sapiens (Human)).